Reading from the N-terminus, the 223-residue chain is Ribonuclease T (223 aa).

The region spanning 20-194 (VVIDVETAGF…YDTERTAELF (175 aa)) is the Exonuclease domain. Asp-23, Glu-25, His-181, and Asp-186 together coordinate Mg(2+). Catalysis depends on His-181, which acts as the Proton donor/acceptor.

It belongs to the RNase T family. Homodimer. Requires Mg(2+) as cofactor.

Its function is as follows. Trims short 3' overhangs of a variety of RNA species, leaving a one or two nucleotide 3' overhang. Responsible for the end-turnover of tRNA: specifically removes the terminal AMP residue from uncharged tRNA (tRNA-C-C-A). Also appears to be involved in tRNA biosynthesis. The polypeptide is Ribonuclease T (Shewanella baltica (strain OS155 / ATCC BAA-1091)).